Here is a 268-residue protein sequence, read N- to C-terminus: Inositol monophosphatase 3 (268 aa).

Residues Glu-71, Asp-91, Leu-93, and Asp-94 each contribute to the Mg(2+) site. Glu-71 is a binding site for substrate. Substrate contacts are provided by residues 93–96 (LDGT), 194–196 (GSC), Glu-213, and Asp-221. Asp-221 is a Mg(2+) binding site.

It belongs to the inositol monophosphatase superfamily. The cofactor is Mg(2+). As to expression, expressed in the shoot apex, roots, stems, leaves, flowers and young and mature green fruits.

It catalyses the reaction a myo-inositol phosphate + H2O = myo-inositol + phosphate. Its pathway is polyol metabolism; myo-inositol biosynthesis; myo-inositol from D-glucose 6-phosphate: step 2/2. Its function is as follows. Responsible for the provision of inositol required for synthesis of phosphatidylinositol and polyphosphoinositides. In Solanum lycopersicum (Tomato), this protein is Inositol monophosphatase 3 (IMP3).